A 552-amino-acid polypeptide reads, in one-letter code: DNA ligase (552 aa).

Glu229 lines the ATP pocket. The N6-AMP-lysine intermediate role is filled by Lys231. Residues Arg236 and Glu283 each contribute to the ATP site. The Mg(2+) site is built by Glu283 and Glu377. ATP is bound by residues Lys382 and Lys397.

It belongs to the ATP-dependent DNA ligase family. Interacts with host TOP2A and TOP2B. The cofactor is Mg(2+).

It is found in the host cytoplasm. It carries out the reaction ATP + (deoxyribonucleotide)n-3'-hydroxyl + 5'-phospho-(deoxyribonucleotide)m = (deoxyribonucleotide)n+m + AMP + diphosphate.. Its function is as follows. DNA ligase that seals nicks in double-stranded DNA during DNA replication, DNA recombination and DNA repair. Recruits cellular topoisomerase II to sites of viral replication and assembly. In Vaccinia virus (strain Copenhagen) (VACV), this protein is DNA ligase (OPG180).